Here is a 556-residue protein sequence, read N- to C-terminus: Potassium-transporting ATPase potassium-binding subunit (556 aa).

10 helical membrane-spanning segments follow: residues 1–21 (MTWI…GIAQ), 60–80 (SYAR…YALQ), 130–150 (GLCV…VALI), 173–193 (LRIL…GGAV), 245–265 (PQPW…FSLP), 281–301 (ILAA…AAEF), 374–394 (GLYG…LLVG), 416–436 (ILVM…VPGL), 482–502 (AALG…ILAL), and 529–549 (LIVF…LTLG).

The protein belongs to the KdpA family. The system is composed of three essential subunits: KdpA, KdpB and KdpC.

The protein localises to the cell membrane. Its function is as follows. Part of the high-affinity ATP-driven potassium transport (or Kdp) system, which catalyzes the hydrolysis of ATP coupled with the electrogenic transport of potassium into the cytoplasm. This subunit binds the extracellular potassium ions and delivers the ions to the membrane domain of KdpB through an intramembrane tunnel. This chain is Potassium-transporting ATPase potassium-binding subunit, found in Cutibacterium acnes (strain DSM 16379 / KPA171202) (Propionibacterium acnes).